The chain runs to 34 residues: MDIRLLIVLLPVLAAASWALYNIGRVALQQFRSM.

At 1–4 (MDIR) the chain is on the lumenal side. Residues 5–23 (LLIVLLPVLAAASWALYNI) traverse the membrane as a helical segment. At 24–34 (GRVALQQFRSM) the chain is on the stromal side.

The protein belongs to the PsbY family. PSII is composed of 1 copy each of membrane proteins PsbA, PsbB, PsbC, PsbD, PsbE, PsbF, PsbH, PsbI, PsbJ, PsbK, PsbL, PsbM, PsbT, PsbX, PsbY, PsbZ, Psb30/Ycf12, at least 3 peripheral proteins of the oxygen-evolving complex and a large number of cofactors. It forms dimeric complexes.

The protein resides in the plastid. It localises to the chloroplast thylakoid membrane. Its function is as follows. Loosely associated component of the core of photosystem II (PSII), it is not always seen in crystals. PSII is a light-driven water plastoquinone oxidoreductase, using light energy to abstract electrons from H(2)O, generating a proton gradient subsequently used for ATP formation. The sequence is that of Photosystem II reaction center protein Y from Gracilaria tenuistipitata var. liui (Red alga).